We begin with the raw amino-acid sequence, 291 residues long: Transmembrane protein 41B (291 aa).

Residues 1 to 11 show a composition bias toward basic and acidic residues; it reads MAKGRVAERSQ. A disordered region spans residues 1 to 38; sequence MAKGRVAERSQTEMLHSTPAGDRAVGTQGSAAPGNKDH. Thr-18 carries the post-translational modification Phosphothreonine. The next 6 helical transmembrane spans lie at 52–72, 109–129, 147–169, 197–217, 225–245, and 262–282; these read TSLL…FLVY, FYVQ…TFAI, LALF…LSYL, LINY…FINI, PLKV…FVAI, and SWNS…PAIF. Positions 140–251 are VTT domain; required for its function in autophagy; sequence GFLYPFPLAL…FVAIKAGTTL (112 aa).

It belongs to the TMEM41 family. As to quaternary structure, interacts with VMP1. Interacts with COPA, COPB1, VDAC1 and ERLIN2. Interacts with ATG2A. Interacts with SURF4.

Its subcellular location is the endoplasmic reticulum membrane. It is found in the endomembrane system. It carries out the reaction a 1,2-diacyl-sn-glycero-3-phospho-L-serine(in) = a 1,2-diacyl-sn-glycero-3-phospho-L-serine(out). It catalyses the reaction cholesterol(in) = cholesterol(out). The catalysed reaction is a 1,2-diacyl-sn-glycero-3-phosphocholine(in) = a 1,2-diacyl-sn-glycero-3-phosphocholine(out). The enzyme catalyses a 1,2-diacyl-sn-glycero-3-phosphoethanolamine(in) = a 1,2-diacyl-sn-glycero-3-phosphoethanolamine(out). In terms of biological role, phospholipid scramblase involved in lipid homeostasis and membrane dynamics processes. Has phospholipid scramblase activity toward cholesterol and phosphatidylserine, as well as phosphatidylethanolamine and phosphatidylcholine. Required for autophagosome formation: participates in early stages of autophagosome biogenesis at the endoplasmic reticulum (ER) membrane by reequilibrating the leaflets of the ER as lipids are extracted by ATG2 (ATG2A or ATG2B) to mediate autophagosome assembly. In addition to autophagy, involved in other processes in which phospholipid scramblase activity is required. Required for normal motor neuron development. This chain is Transmembrane protein 41B, found in Rattus norvegicus (Rat).